The chain runs to 371 residues: Phosphatase IMPL1, chloroplastic (371 aa).

A chloroplast-targeting transit peptide spans 1–60 (MGRSLIFSGNMSLRISHLPRSSLPLQNPISGRTVNRTFRYRCTRILSNSFKSTTRLQTKA). Position 61 is an N-acetylvaline (V61). Residues E148, D165, L167, and D168 each contribute to the Mg(2+) site. E148 serves as a coordination point for substrate. Substrate-binding positions include 167-170 (LDGT), 273-275 (GAA), E292, and D299. Position 299 (D299) interacts with Mg(2+).

Belongs to the inositol monophosphatase superfamily. Mg(2+) serves as cofactor. Ubiquitous. Expressed in pistil and seed endosperm.

The protein localises to the plastid. The protein resides in the chloroplast stroma. It carries out the reaction a myo-inositol phosphate + H2O = myo-inositol + phosphate. It functions in the pathway polyol metabolism; myo-inositol biosynthesis; myo-inositol from D-glucose 6-phosphate: step 2/2. Phosphatase acting preferentially on D-myoinositol 1-phosphate (D-Ins 1-P). The chain is Phosphatase IMPL1, chloroplastic (IMPL1) from Arabidopsis thaliana (Mouse-ear cress).